A 339-amino-acid chain; its full sequence is UDP-3-O-acylglucosamine N-acyltransferase (339 aa).

Histidine 239 (proton acceptor) is an active-site residue.

It belongs to the transferase hexapeptide repeat family. LpxD subfamily. In terms of assembly, homotrimer.

It carries out the reaction a UDP-3-O-[(3R)-3-hydroxyacyl]-alpha-D-glucosamine + a (3R)-hydroxyacyl-[ACP] = a UDP-2-N,3-O-bis[(3R)-3-hydroxyacyl]-alpha-D-glucosamine + holo-[ACP] + H(+). The protein operates within bacterial outer membrane biogenesis; LPS lipid A biosynthesis. Its function is as follows. Catalyzes the N-acylation of UDP-3-O-acylglucosamine using 3-hydroxyacyl-ACP as the acyl donor. Is involved in the biosynthesis of lipid A, a phosphorylated glycolipid that anchors the lipopolysaccharide to the outer membrane of the cell. This chain is UDP-3-O-acylglucosamine N-acyltransferase, found in Aliivibrio fischeri (strain ATCC 700601 / ES114) (Vibrio fischeri).